A 127-amino-acid chain; its full sequence is Small ribosomal subunit protein uS13 (127 aa).

The disordered stretch occupies residues 90–127; sequence KRHREGLPVNGQRTRTNARTRKGKRKTVAGRSQSTQKK. A compositionally biased stretch (basic residues) spans 105 to 117; it reads TNARTRKGKRKTV.

Belongs to the universal ribosomal protein uS13 family. In terms of assembly, part of the 30S ribosomal subunit. Forms a loose heterodimer with protein S19. Forms two bridges to the 50S subunit in the 70S ribosome.

Its function is as follows. Located at the top of the head of the 30S subunit, it contacts several helices of the 16S rRNA. In the 70S ribosome it contacts the 23S rRNA (bridge B1a) and protein L5 of the 50S subunit (bridge B1b), connecting the 2 subunits; these bridges are implicated in subunit movement. Contacts the tRNAs in the A and P-sites. The sequence is that of Small ribosomal subunit protein uS13 from Salinibacter ruber (strain DSM 13855 / M31).